An 81-amino-acid polypeptide reads, in one-letter code: Trefoil factor 3 (81 aa).

The N-terminal stretch at 1–22 is a signal peptide; the sequence is METRALWLMLLVVLVAGSSGIA. Positions 31–74 constitute a P-type domain; it reads SQCMVPANVRVDCGYPSVTSEQCNNRGCCFDSSIPNVPWCFKPL. 3 disulfide bridges follow: Cys33/Cys59, Cys43/Cys58, and Cys53/Cys70.

As to quaternary structure, monomer. Homodimer; disulfide-linked. As to expression, expressed in goblet cells of the intestines and colon (at protein level). Expressed abundantly in goblet cells of intestine and colon, and at low levels in stomach. No expression in brain, lung, spleen, kidney, uterus, pancreas, liver, heart or thymus.

The protein localises to the secreted. It is found in the extracellular space. The protein resides in the extracellular matrix. Its subcellular location is the cytoplasm. In terms of biological role, involved in the maintenance and repair of the intestinal mucosa. Promotes the mobility of epithelial cells in healing processes (motogen). This chain is Trefoil factor 3 (Tff3), found in Mus musculus (Mouse).